A 163-amino-acid chain; its full sequence is Large ribosomal subunit protein uL10 (163 aa).

This sequence belongs to the universal ribosomal protein uL10 family. In terms of assembly, part of the ribosomal stalk of the 50S ribosomal subunit. The N-terminus interacts with L11 and the large rRNA to form the base of the stalk. The C-terminus forms an elongated spine to which L12 dimers bind in a sequential fashion forming a multimeric L10(L12)X complex.

In terms of biological role, forms part of the ribosomal stalk, playing a central role in the interaction of the ribosome with GTP-bound translation factors. This chain is Large ribosomal subunit protein uL10, found in Blochmanniella pennsylvanica (strain BPEN).